The following is a 73-amino-acid chain: MDIKEEAIETEGIVKESLPNTMFRVELKNKHIVLAHLSGKMRKHFIKIVPGDKVKVELSPYDLTKGRIVYREK.

The S1-like domain occupies 1-73; the sequence is MDIKEEAIET…TKGRIVYREK (73 aa).

It belongs to the IF-1 family. As to quaternary structure, component of the 30S ribosomal translation pre-initiation complex which assembles on the 30S ribosome in the order IF-2 and IF-3, IF-1 and N-formylmethionyl-tRNA(fMet); mRNA recruitment can occur at any time during PIC assembly.

It localises to the cytoplasm. One of the essential components for the initiation of protein synthesis. Stabilizes the binding of IF-2 and IF-3 on the 30S subunit to which N-formylmethionyl-tRNA(fMet) subsequently binds. Helps modulate mRNA selection, yielding the 30S pre-initiation complex (PIC). Upon addition of the 50S ribosomal subunit IF-1, IF-2 and IF-3 are released leaving the mature 70S translation initiation complex. This Borreliella afzelii (strain PKo) (Borrelia afzelii) protein is Translation initiation factor IF-1.